Consider the following 309-residue polypeptide: Prepilin leader peptidase/N-methyltransferase (309 aa).

Residues 35 to 55 traverse the membrane as a helical segment; the sequence is MQLAFAIVLGLVVGSFINVVV. Residues C96, C99, C121, and C124 each contribute to the Zn(2+) site. The next 6 membrane-spanning stretches (helical) occupy residues 147-167, 183-203, 207-227, 230-250, 253-273, and 288-308; these read LALFGPSGAALAAFGLCAALL, LTLPLLWAGLCVNLWGTFASL, VIGAIAGYLFLWCILWLFKLL, IEGIGYGDLKLLAALGAWLGW, LPQVVLIAAVAGAAVGLVATW, and FLAAGGAATLFFGTPFYLLLG.

Belongs to the peptidase A24 family. The cofactor is Zn(2+).

The protein resides in the cell inner membrane. The enzyme catalyses Typically cleaves a -Gly-|-Phe- bond to release an N-terminal, basic peptide of 5-8 residues from type IV prepilin, and then N-methylates the new N-terminal amino group, the methyl donor being S-adenosyl-L-methionine.. In terms of biological role, plays an essential role in type IV pili and type II pseudopili formation by proteolytically removing the leader sequence from substrate proteins and subsequently monomethylating the alpha-amino group of the newly exposed N-terminal phenylalanine. The polypeptide is Prepilin leader peptidase/N-methyltransferase (gspO) (Burkholderia pseudomallei (strain K96243)).